We begin with the raw amino-acid sequence, 234 residues long: Sperm-associated microtubule inner protein 5 (234 aa).

Microtubule inner protein component of sperm flagellar doublet microtubules. As to expression, expressed in testis (at protein level). Strongly expressed in peritubular cells and Leydig cells and weakly expressed in the cytoplasm of spermatocytes.

It is found in the cytoplasm. The protein localises to the cytoskeleton. The protein resides in the flagellum axoneme. Its subcellular location is the nucleus. Its function is as follows. Microtubule inner protein (MIP) part of the dynein-decorated doublet microtubules (DMTs) in flagellum axoneme. May serve to reinforce and thus stabilize the microtubule structure in the sperm flagella. In Homo sapiens (Human), this protein is Sperm-associated microtubule inner protein 5.